Here is a 384-residue protein sequence, read N- to C-terminus: Probable fructokinase-6, chloroplastic (384 aa).

A chloroplast-targeting transit peptide spans 1–46 (MALQATTTTFCFSGPTFRSTPHSLTSKRPISIKATTSSPSRLSNSR). Residues 34–61 (ATTSSPSRLSNSRSNLKGRALSSDGSTQ) are disordered. Low complexity predominate over residues 35 to 48 (TTSSPSRLSNSRSN).

It belongs to the carbohydrate kinase PfkB family.

The protein resides in the plastid. It localises to the chloroplast. The catalysed reaction is D-fructose + ATP = D-fructose 6-phosphate + ADP + H(+). The protein operates within glycan biosynthesis; starch biosynthesis. May play an important role in maintaining the flux of carbon towards starch formation. In Arabidopsis thaliana (Mouse-ear cress), this protein is Probable fructokinase-6, chloroplastic.